The primary structure comprises 295 residues: MPRLEGSMVAIVTPMKDGAVDLRALRELTEWQIAEGTDGIVPCGTTGEGATLTAAERAEVIRAVVEVARGRALVVAGAGSNATHEAIEGVKAAKALGADAALVVTPYYNKPTPEGLYRHYTAIWEATRFPVVAYNVPGRTAVDMGPDTVARLAKAGAIVGIKEATASMDRQVQLVERIGKDAIAYLSGDDFTVVPYIACGGHGVISVISNIAPRAMKDLVVAARLGDFARALDLQVRMAELNRVMFVETSPGPVKAAVALLGRAGPELRLPLAPVSEASLSKVREAMTRFGLKLA.

Threonine 46 provides a ligand contact to pyruvate. Tyrosine 134 (proton donor/acceptor) is an active-site residue. Lysine 162 (schiff-base intermediate with substrate) is an active-site residue. Residue isoleucine 205 coordinates pyruvate.

Belongs to the DapA family. Homotetramer; dimer of dimers.

Its subcellular location is the cytoplasm. It catalyses the reaction L-aspartate 4-semialdehyde + pyruvate = (2S,4S)-4-hydroxy-2,3,4,5-tetrahydrodipicolinate + H2O + H(+). Its pathway is amino-acid biosynthesis; L-lysine biosynthesis via DAP pathway; (S)-tetrahydrodipicolinate from L-aspartate: step 3/4. Its function is as follows. Catalyzes the condensation of (S)-aspartate-beta-semialdehyde [(S)-ASA] and pyruvate to 4-hydroxy-tetrahydrodipicolinate (HTPA). The protein is 4-hydroxy-tetrahydrodipicolinate synthase of Anaeromyxobacter sp. (strain Fw109-5).